A 484-amino-acid chain; its full sequence is Glucan endo-1,3-beta-glucosidase 5 (484 aa).

An N-terminal signal peptide occupies residues 1–26; sequence MLFKGVFAVFFVITLLYASLLIEVEG. Asparagine 102 is a glycosylation site (N-linked (GlcNAc...) asparagine). Catalysis depends on glutamate 122, which acts as the Proton donor. N-linked (GlcNAc...) asparagine glycosylation is found at asparagine 129 and asparagine 260. Catalysis depends on glutamate 267, which acts as the Nucleophile. Cysteine 366 and cysteine 428 are disulfide-bonded. Asparagine 409 carries N-linked (GlcNAc...) asparagine glycosylation. A lipid anchor (GPI-anchor amidated alanine) is attached at alanine 460. Residues 461–484 constitute a propeptide, removed in mature form; sequence SAMMPITRSTAVLLLLSICLYIVL.

This sequence belongs to the glycosyl hydrolase 17 family. In terms of processing, contains two additional disulfide bonds.

It is found in the cell membrane. It catalyses the reaction Hydrolysis of (1-&gt;3)-beta-D-glucosidic linkages in (1-&gt;3)-beta-D-glucans.. The chain is Glucan endo-1,3-beta-glucosidase 5 from Arabidopsis thaliana (Mouse-ear cress).